Here is a 205-residue protein sequence, read N- to C-terminus: N-(5'-phosphoribosyl)anthranilate isomerase (205 aa).

The protein belongs to the TrpF family.

The catalysed reaction is N-(5-phospho-beta-D-ribosyl)anthranilate = 1-(2-carboxyphenylamino)-1-deoxy-D-ribulose 5-phosphate. It participates in amino-acid biosynthesis; L-tryptophan biosynthesis; L-tryptophan from chorismate: step 3/5. The chain is N-(5'-phosphoribosyl)anthranilate isomerase from Thermotoga petrophila (strain ATCC BAA-488 / DSM 13995 / JCM 10881 / RKU-1).